The sequence spans 526 residues: Probable lipid II flippase MurJ (526 aa).

14 helical membrane passes run 35 to 55 (LMGT…PNLF), 58 to 78 (LFAE…HYSM), 96 to 116 (AIFT…ILGA), 137 to 157 (MFPY…LHSI), 160 to 180 (FVPS…SMYF), 190 to 210 (IAAA…QLIF), 235 to 255 (IIAL…NDLV), 281 to 301 (LLGI…SFHV), 313 to 333 (LITA…FVLF), 362 to 382 (WHSV…AFYA), 391 to 411 (IAGT…FIPL), 415 to 435 (GIAF…WMFL), 459 to 479 (LFSV…AYFF), and 489 to 509 (GVPL…LLLL).

This sequence belongs to the MurJ/MviN family.

It is found in the cell inner membrane. It functions in the pathway cell wall biogenesis; peptidoglycan biosynthesis. In terms of biological role, involved in peptidoglycan biosynthesis. Transports lipid-linked peptidoglycan precursors from the inner to the outer leaflet of the cytoplasmic membrane. The sequence is that of Probable lipid II flippase MurJ from Treponema pallidum (strain Nichols).